The following is a 99-amino-acid chain: Small ribosomal subunit protein bS20 (99 aa).

The segment covering 1 to 20 has biased composition (basic residues); that stretch reads MASAKPKKKNPRLASGRKRV. Residues 1-21 are disordered; the sequence is MASAKPKKKNPRLASGRKRVR.

Belongs to the bacterial ribosomal protein bS20 family.

Its function is as follows. Binds directly to 16S ribosomal RNA. The sequence is that of Small ribosomal subunit protein bS20 from Verminephrobacter eiseniae (strain EF01-2).